The sequence spans 581 residues: Arginine--tRNA ligase (581 aa).

Residues 126–136 (PNLAKEMHVGH) carry the 'HIGH' region motif.

Belongs to the class-I aminoacyl-tRNA synthetase family. As to quaternary structure, monomer.

It localises to the cytoplasm. The enzyme catalyses tRNA(Arg) + L-arginine + ATP = L-arginyl-tRNA(Arg) + AMP + diphosphate. The protein is Arginine--tRNA ligase of Shewanella piezotolerans (strain WP3 / JCM 13877).